The primary structure comprises 868 residues: Probable mixed-linked glucan synthase 3 (868 aa).

The disordered stretch occupies residues 36-68 (ERKAAGGGGGGAKGKHWAAADKGERRAAKECGG). Residues 53–68 (AAADKGERRAAKECGG) are compositionally biased toward basic and acidic residues. Transmembrane regions (helical) follow at residues 86 to 106 (LLHP…LFFG) and 116 to 136 (IMWF…SWLL). The active site involves D211. 2 residues coordinate substrate: D412 and D414. D573 is an active-site residue. The next 6 helical transmembrane spans lie at 649–669 (IYPV…MWLI), 686–706 (LLVI…WAGI), 717–737 (FFMI…VVNL), 771–791 (MLIP…VAIG), 810–830 (MGLL…LAIM), and 838–858 (IILV…YVAT).

This sequence belongs to the glycosyltransferase 2 family. Plant cellulose synthase-like F subfamily.

It localises to the golgi apparatus membrane. Its function is as follows. May catalyze both beta-1,3 and beta-1,4 glycosidic linkage on beta-D-glucan. Essential for (1,3;1,4)-beta-D-glucans synthesis in grasses and cereals (Poaceae). The mixed-linked glucans (which are not present in walls of dicotyledons or most other monocotyledonous plants) are particularly important constituents of the walls of the starchy endosperm and aleurone cells of cereal grains such as oats, wheat, rice and barley. They can account for up to 70% by weight of the wall. The sequence is that of Probable mixed-linked glucan synthase 3 (CSLF3) from Oryza sativa subsp. japonica (Rice).